The chain runs to 84 residues: RNA-binding protein Hfq (84 aa).

The 61-residue stretch at 11–71 (DTFLNHVRKN…ISTIMPGHPV (61 aa)) folds into the Sm domain.

This sequence belongs to the Hfq family. In terms of assembly, homohexamer.

Functionally, RNA chaperone that binds small regulatory RNA (sRNAs) and mRNAs to facilitate mRNA translational regulation in response to envelope stress, environmental stress and changes in metabolite concentrations. Also binds with high specificity to tRNAs. In Methylobacterium nodulans (strain LMG 21967 / CNCM I-2342 / ORS 2060), this protein is RNA-binding protein Hfq.